Reading from the N-terminus, the 108-residue chain is Integration host factor subunit alpha (108 aa).

The protein belongs to the bacterial histone-like protein family. As to quaternary structure, heterodimer of an alpha and a beta chain.

This protein is one of the two subunits of integration host factor, a specific DNA-binding protein that functions in genetic recombination as well as in transcriptional and translational control. This chain is Integration host factor subunit alpha, found in Methylorubrum extorquens (strain CM4 / NCIMB 13688) (Methylobacterium extorquens).